We begin with the raw amino-acid sequence, 78 residues long: Acyl carrier protein (78 aa).

The Carrier domain maps to 2–77 (STIEERVKKI…AAIDFINANQ (76 aa)). S37 is subject to O-(pantetheine 4'-phosphoryl)serine.

It belongs to the acyl carrier protein (ACP) family. Post-translationally, 4'-phosphopantetheine is transferred from CoA to a specific serine of apo-ACP by AcpS. This modification is essential for activity because fatty acids are bound in thioester linkage to the sulfhydryl of the prosthetic group.

The protein resides in the cytoplasm. It participates in lipid metabolism; fatty acid biosynthesis. Functionally, carrier of the growing fatty acid chain in fatty acid biosynthesis. The protein is Acyl carrier protein of Yersinia pseudotuberculosis serotype O:1b (strain IP 31758).